A 519-amino-acid polypeptide reads, in one-letter code: Laccase-2 (519 aa).

Positions 1–20 (MGLQRFSFFVTLALVARSLA) are cleaved as a signal peptide. 2 Plastocyanin-like domains span residues 22–147 (IGPV…FVVY) and 159–301 (VDNE…ILRY). An N-linked (GlcNAc...) asparagine glycan is attached at Asn74. Positions 84, 86, 129, and 131 each coordinate Cu cation. 2 cysteine pairs are disulfide-bonded: Cys105/Cys508 and Cys137/Cys225. N-linked (GlcNAc...) asparagine glycosylation is found at Asn161, Asn228, Asn237, Asn271, Asn353, and Asn361. The region spanning 368–490 (TVPVLLQILS…AGFAIVFAED (123 aa)) is the Plastocyanin-like 3 domain. Positions 415, 418, 420, 472, 473, 474, and 478 each coordinate Cu cation.

This sequence belongs to the multicopper oxidase family. As to quaternary structure, homodimer. Cu cation serves as cofactor.

It is found in the secreted. It carries out the reaction 4 hydroquinone + O2 = 4 benzosemiquinone + 2 H2O. Functionally, lignin degradation and detoxification of lignin-derived products. This is Laccase-2 from Trametes villosa (White-rot fungus).